We begin with the raw amino-acid sequence, 56 residues long: Small ribosomal subunit protein uS14 (56 aa).

Residues cysteine 21, cysteine 24, cysteine 39, and cysteine 42 each coordinate Zn(2+).

The protein belongs to the universal ribosomal protein uS14 family. Zinc-binding uS14 subfamily. Part of the 30S ribosomal subunit. Requires Zn(2+) as cofactor.

In terms of biological role, binds 16S rRNA, required for the assembly of 30S particles. In Pyrococcus abyssi (strain GE5 / Orsay), this protein is Small ribosomal subunit protein uS14.